A 52-amino-acid chain; its full sequence is Alpha-1-antiproteinase 3 (52 aa).

Residues 1-20 are disordered; it reads EDLQGDAVPEEXATKDDNEH.

Belongs to the serpin family. N-glycosylated; contains glycans with bi- and triantennary side chains. As to expression, plasma.

It localises to the secreted. In Equus caballus (Horse), this protein is Alpha-1-antiproteinase 3.